Here is a 355-residue protein sequence, read N- to C-terminus: Apyrase apy-1 (355 aa).

Residues 1-6 (MTQESN) lie on the Cytoplasmic side of the membrane. A helical; Signal-anchor for type II membrane protein transmembrane segment spans residues 7–29 (SNFFNFLLFGFVTAIAFYSGTQF). The N-linked (GlcNAc...) asparagine glycan is linked to N30. The Lumenal portion of the chain corresponds to 30 to 355 (NKSSEQEEHI…PYKYEGIAFA (326 aa)). Residues S119, E166, and E235 each contribute to the Ca(2+) site. A glycan (N-linked (GlcNAc...) asparagine) is linked at N291. Residue E350 coordinates Ca(2+).

The protein belongs to the apyrase family. The cofactor is Ca(2+).

Its subcellular location is the endomembrane system. The catalysed reaction is a ribonucleoside 5'-diphosphate + H2O = a ribonucleoside 5'-phosphate + phosphate + H(+). Functionally, hydrolyzes UDP and to a lesser extent GDP. By preventing the accumulation of NDP, may promote the reglucosylation of incompletely folded glycoproteins in the endoplasmic reticulum following the unfolded protein response. This is Apyrase apy-1 from Caenorhabditis elegans.